Reading from the N-terminus, the 673-residue chain is Putative transcription factor tau subunit sfc9 (673 aa).

As to quaternary structure, may be a component of the TFIIIC complex.

The protein resides in the nucleus. The chain is Putative transcription factor tau subunit sfc9 from Schizosaccharomyces pombe (strain 972 / ATCC 24843) (Fission yeast).